The sequence spans 84 residues: Metallothionein-like protein 2C (84 aa).

Belongs to the metallothionein superfamily. Type 15 family.

Its subcellular location is the cytoplasm. It localises to the cytosol. Its function is as follows. Metallothioneins have a high content of cysteine residues that bind various heavy metals. Acts as a reactive oxygen species (ROS) scavenger in the cytosol. Possesses superoxide anion and hydroxyl radical scavenging activities in vitro. Plays a role during root development, lateral root initiation and seed embryo germination, possibly by regulating levels of cytokinin. The protein is Metallothionein-like protein 2C (MT2C) of Oryza sativa subsp. indica (Rice).